A 228-amino-acid polypeptide reads, in one-letter code: D-lyxose/D-mannose isomerase (228 aa).

4 residues coordinate Mn(2+): His103, His105, Glu110, and His171.

This sequence belongs to the D-lyxose ketol-isomerase family. As to quaternary structure, homodimer. The cofactor is Mn(2+).

It carries out the reaction D-lyxose = D-xylulose. The catalysed reaction is D-mannose = D-fructose. In terms of biological role, sugar isomerase that catalyzes the reversible isomerization of D-lyxose to D-xylulose, and D-mannose to D-fructose. Shows optimum activity using D-lyxose as substrate, but can also effectively catalyze the isomerization between D-fructose and D-mannose. Shows lower activity with L-gulose, D-talose and L-ribose. The sequence is that of D-lyxose/D-mannose isomerase from Serratia proteamaculans.